The sequence spans 312 residues: Ribonuclease Z (312 aa).

Histidine 62, histidine 64, aspartate 66, histidine 67, histidine 144, aspartate 215, and histidine 273 together coordinate Zn(2+). Aspartate 66 (proton acceptor) is an active-site residue.

It belongs to the RNase Z family. As to quaternary structure, homodimer. It depends on Zn(2+) as a cofactor.

The catalysed reaction is Endonucleolytic cleavage of RNA, removing extra 3' nucleotides from tRNA precursor, generating 3' termini of tRNAs. A 3'-hydroxy group is left at the tRNA terminus and a 5'-phosphoryl group is left at the trailer molecule.. Zinc phosphodiesterase, which displays some tRNA 3'-processing endonuclease activity. Probably involved in tRNA maturation, by removing a 3'-trailer from precursor tRNA. The protein is Ribonuclease Z of Prochlorococcus marinus subsp. pastoris (strain CCMP1986 / NIES-2087 / MED4).